Consider the following 767-residue polypeptide: Probable ubiquitin carboxyl-terminal hydrolase creB (767 aa).

The region spanning 49–462 (YGMENYGNTC…CAYVLFYQET (414 aa)) is the USP domain. C58 serves as the catalytic Nucleophile. Disordered stretches follow at residues 107 to 140 (EAEA…DSPE) and 232 to 263 (ASKQ…KTPN). Residues 250 to 263 (SVDQSSSTGSKTPN) are compositionally biased toward polar residues. H413 (proton acceptor) is an active-site residue. The tract at residues 490-767 (LKQNGFPQSP…LRKKSFSILS (278 aa)) is disordered. Composition is skewed to low complexity over residues 540-554 (ESAP…SPLS) and 564-573 (ERVTTVATPP). A coiled-coil region spans residues 574–641 (KNDALAKKER…ASKAEEDRRL (68 aa)). The span at 577 to 650 (ALAKKERARE…LSHENGKEKQ (74 aa)) shows a compositional bias: basic and acidic residues. Residues 656–667 (RLKRGSKSLSHR) are compositionally biased toward basic residues. Residues 690–700 (STLSQTGPTSE) are compositionally biased toward polar residues. Low complexity predominate over residues 701–713 (QQQQQQQQQQQQQ). The segment covering 731–749 (TIREDEQVNHKDSKHERTG) has biased composition (basic and acidic residues). Residues 750–767 (HGKWRSFSLRKKSFSILS) show a composition bias toward basic residues.

This sequence belongs to the peptidase C19 family. As to quaternary structure, interacts with creA, creC and qutD.

It catalyses the reaction Thiol-dependent hydrolysis of ester, thioester, amide, peptide and isopeptide bonds formed by the C-terminal Gly of ubiquitin (a 76-residue protein attached to proteins as an intracellular targeting signal).. In terms of biological role, ubiquitin thioesterase component of the regulatory network controlling carbon source utilization through ubiquitination and deubiquitination involving creA, creB, creC, creD and acrB. Deubiquitinates the creA catabolic repressor and the quinate permease qutD. Also plays a role in response to carbon starvation and the control of extracellular proteases activity. The polypeptide is Probable ubiquitin carboxyl-terminal hydrolase creB (creB) (Aspergillus fumigatus (strain CBS 144.89 / FGSC A1163 / CEA10) (Neosartorya fumigata)).